A 161-amino-acid chain; its full sequence is Putative pre-16S rRNA nuclease (161 aa).

The protein belongs to the YqgF nuclease family.

It localises to the cytoplasm. Its function is as follows. Could be a nuclease involved in processing of the 5'-end of pre-16S rRNA. This is Putative pre-16S rRNA nuclease from Methylocella silvestris (strain DSM 15510 / CIP 108128 / LMG 27833 / NCIMB 13906 / BL2).